A 140-amino-acid polypeptide reads, in one-letter code: Endoribonuclease YbeY (140 aa).

The Zn(2+) site is built by His100, His104, and His110.

This sequence belongs to the endoribonuclease YbeY family. Zn(2+) is required as a cofactor.

Its subcellular location is the cytoplasm. In terms of biological role, single strand-specific metallo-endoribonuclease involved in late-stage 70S ribosome quality control and in maturation of the 3' terminus of the 16S rRNA. The chain is Endoribonuclease YbeY from Helicobacter pylori (strain P12).